A 131-amino-acid polypeptide reads, in one-letter code: Protein TAP2 (131 aa).

A signal peptide spans 1–22 (MAKSSPTYTVLFLLGLLALSTA). A disordered region spans residues 75–101 (ARSGGETDVKKMEGSMPDQGKTAGRDQ).

As to expression, tapetum of anthers.

The chain is Protein TAP2 (TAP2) from Antirrhinum majus (Garden snapdragon).